Here is a 429-residue protein sequence, read N- to C-terminus: ATP-sensitive inward rectifier potassium channel 12 (429 aa).

The Cytoplasmic segment spans residues 1 to 76; it reads MTAGRVNPYS…IADMFTTCVD (76 aa). The chain crosses the membrane as a helical span at residues 77–103; sequence IRWRYMLLLFSLAFLVSWLLFGLIFWL. 2 residues coordinate a 1,2-diacyl-sn-glycero-3-phospho-(1D-myo-inositol-4,5-bisphosphate): R78 and R80. Residues 104–129 lie on the Extracellular side of the membrane; that stretch reads IALIHGDLENPGGDDTFKPCVLQVNG. C123 and C155 form a disulfide bridge. The helical; Pore-forming intramembrane region spans 130 to 146; that stretch reads FVAAFLFSIETQTTIGY. Residues T143, I144, G145, and Y146 each coordinate K(+). Positions 143 to 148 match the Selectivity filter motif; sequence TIGYGF. The Extracellular portion of the chain corresponds to 147–155; that stretch reads GFRCVTEEC. Residues 156–183 form a helical membrane-spanning segment; that stretch reads PLAVFMVVVQSIVGCIIDSFMIGAIMAK. Residues K183 and K188 each coordinate a 1,2-diacyl-sn-glycero-3-phospho-(1D-myo-inositol-4,5-bisphosphate). Over 184 to 429 the chain is Cytoplasmic; sequence MARPKKRAQT…QRSYRRESEI (246 aa). A disordered region spans residues 386–407; it reads RDEDEEDDDSRGLDDLSPDNRH. Over residues 395-407 the composition is skewed to basic and acidic residues; it reads SRGLDDLSPDNRH.

The protein belongs to the inward rectifier-type potassium channel family. In terms of assembly, homotetramer.

It localises to the membrane. The protein localises to the cell membrane. Its subcellular location is the sarcolemma. The protein resides in the T-tubule. The catalysed reaction is K(+)(in) = K(+)(out). Activated by phosphatidylinositol 4,5-bisphosphate (PtdIns(4,5)P2). PtdIns(4,5)P2 binding to the cytoplasmic side of the channel triggers a conformation change leading to channel opening. Its function is as follows. Inward rectifying potassium channel that probably participates in controlling the resting membrane potential in electrically excitable cells. Probably participates in establishing action potential waveform and excitability of neuronal and muscle tissues. Inward rectifier potassium channels are characterized by a greater tendency to allow potassium to flow into the cell rather than out of it. Their voltage dependence is regulated by the concentration of extracellular potassium; as external potassium is raised, the voltage range of the channel opening shifts to more positive voltages. The inward rectification is mainly due to the blockage of outward current by internal magnesium. This chain is ATP-sensitive inward rectifier potassium channel 12 (KCNJ12), found in Gallus gallus (Chicken).